The sequence spans 205 residues: Imidazole glycerol phosphate synthase subunit HisH (205 aa).

Residues 1 to 205 (MIALVDYGGG…FFKMALGDKK (205 aa)) form the Glutamine amidotransferase type-1 domain. Residue Cys-79 is the Nucleophile of the active site. Active-site residues include His-181 and Glu-183.

In terms of assembly, heterodimer of HisH and HisF.

The protein localises to the cytoplasm. It carries out the reaction 5-[(5-phospho-1-deoxy-D-ribulos-1-ylimino)methylamino]-1-(5-phospho-beta-D-ribosyl)imidazole-4-carboxamide + L-glutamine = D-erythro-1-(imidazol-4-yl)glycerol 3-phosphate + 5-amino-1-(5-phospho-beta-D-ribosyl)imidazole-4-carboxamide + L-glutamate + H(+). The enzyme catalyses L-glutamine + H2O = L-glutamate + NH4(+). Its pathway is amino-acid biosynthesis; L-histidine biosynthesis; L-histidine from 5-phospho-alpha-D-ribose 1-diphosphate: step 5/9. IGPS catalyzes the conversion of PRFAR and glutamine to IGP, AICAR and glutamate. The HisH subunit catalyzes the hydrolysis of glutamine to glutamate and ammonia as part of the synthesis of IGP and AICAR. The resulting ammonia molecule is channeled to the active site of HisF. This is Imidazole glycerol phosphate synthase subunit HisH from Dehalococcoides mccartyi (strain ATCC BAA-2266 / KCTC 15142 / 195) (Dehalococcoides ethenogenes (strain 195)).